Consider the following 602-residue polypeptide: Elongation factor 4 (602 aa).

Residues 7–189 (KYIRNFSIVA…AIVNKVPAPE (183 aa)) form the tr-type G domain. Residues 19–24 (DHGKST) and 136–139 (NKID) contribute to the GTP site.

It belongs to the TRAFAC class translation factor GTPase superfamily. Classic translation factor GTPase family. LepA subfamily.

It is found in the cell membrane. It catalyses the reaction GTP + H2O = GDP + phosphate + H(+). Functionally, required for accurate and efficient protein synthesis under certain stress conditions. May act as a fidelity factor of the translation reaction, by catalyzing a one-codon backward translocation of tRNAs on improperly translocated ribosomes. Back-translocation proceeds from a post-translocation (POST) complex to a pre-translocation (PRE) complex, thus giving elongation factor G a second chance to translocate the tRNAs correctly. Binds to ribosomes in a GTP-dependent manner. The sequence is that of Elongation factor 4 from Clostridium botulinum (strain Okra / Type B1).